The following is a 166-amino-acid chain: Regulatory protein RecX (166 aa).

The protein belongs to the RecX family.

The protein localises to the cytoplasm. Modulates RecA activity. The protein is Regulatory protein RecX of Salmonella newport (strain SL254).